A 179-amino-acid polypeptide reads, in one-letter code: Large ribosomal subunit protein uL5 (179 aa).

The protein belongs to the universal ribosomal protein uL5 family. As to quaternary structure, part of the 50S ribosomal subunit; part of the 5S rRNA/L5/L18/L25 subcomplex. Contacts the 5S rRNA and the P site tRNA. Forms a bridge to the 30S subunit in the 70S ribosome.

This is one of the proteins that bind and probably mediate the attachment of the 5S RNA into the large ribosomal subunit, where it forms part of the central protuberance. In the 70S ribosome it contacts protein S13 of the 30S subunit (bridge B1b), connecting the 2 subunits; this bridge is implicated in subunit movement. Contacts the P site tRNA; the 5S rRNA and some of its associated proteins might help stabilize positioning of ribosome-bound tRNAs. The sequence is that of Large ribosomal subunit protein uL5 from Buchnera aphidicola subsp. Schizaphis graminum (strain Sg).